The following is a 225-amino-acid chain: Ribose-5-phosphate isomerase A (225 aa).

Substrate-binding positions include 26 to 29 (TGST), 82 to 85 (DGAD), and 95 to 98 (KGGG). Glu-104 acts as the Proton acceptor in catalysis. Lys-122 contributes to the substrate binding site.

The protein belongs to the ribose 5-phosphate isomerase family. Homodimer.

The enzyme catalyses aldehydo-D-ribose 5-phosphate = D-ribulose 5-phosphate. Its pathway is carbohydrate degradation; pentose phosphate pathway; D-ribose 5-phosphate from D-ribulose 5-phosphate (non-oxidative stage): step 1/1. Its function is as follows. Catalyzes the reversible conversion of ribose-5-phosphate to ribulose 5-phosphate. The protein is Ribose-5-phosphate isomerase A of Streptococcus sanguinis (strain SK36).